We begin with the raw amino-acid sequence, 127 residues long: Fumarate reductase subunit C (127 aa).

Transmembrane regions (helical) follow at residues Ala-30–Val-50, Ile-67–Phe-87, and Ile-107–Met-127.

It belongs to the FrdC family. In terms of assembly, part of an enzyme complex containing four subunits: a flavoprotein (FrdA), an iron-sulfur protein (FrdB), and two hydrophobic anchor proteins (FrdC and FrdD).

The protein localises to the cell inner membrane. Functionally, anchors the catalytic components of the fumarate reductase complex to the cell membrane, binds quinones. The polypeptide is Fumarate reductase subunit C (Vibrio campbellii (strain ATCC BAA-1116)).